The following is a 373-amino-acid chain: Chaperone protein DnaJ (373 aa).

Positions 5 to 70 (DFYATLGVAR…EKRAMYDQYG (66 aa)) constitute a J domain. Residues 134–212 (GVKKRINIPT…CRGVGRNKAV (79 aa)) form a CR-type zinc finger. Residues Cys147, Cys150, Cys164, Cys167, Cys186, Cys189, Cys200, and Cys203 each contribute to the Zn(2+) site. CXXCXGXG motif repeat units follow at residues 147–154 (CDVCNGSG), 164–171 (CPTCKGSG), 186–193 (CPTCRGAG), and 200–207 (CVKCRGVG).

It belongs to the DnaJ family. As to quaternary structure, homodimer. Zn(2+) is required as a cofactor.

Its subcellular location is the cytoplasm. Participates actively in the response to hyperosmotic and heat shock by preventing the aggregation of stress-denatured proteins and by disaggregating proteins, also in an autonomous, DnaK-independent fashion. Unfolded proteins bind initially to DnaJ; upon interaction with the DnaJ-bound protein, DnaK hydrolyzes its bound ATP, resulting in the formation of a stable complex. GrpE releases ADP from DnaK; ATP binding to DnaK triggers the release of the substrate protein, thus completing the reaction cycle. Several rounds of ATP-dependent interactions between DnaJ, DnaK and GrpE are required for fully efficient folding. Also involved, together with DnaK and GrpE, in the DNA replication of plasmids through activation of initiation proteins. The chain is Chaperone protein DnaJ from Neisseria gonorrhoeae (strain ATCC 700825 / FA 1090).